Here is an 875-residue protein sequence, read N- to C-terminus: Alanine--tRNA ligase (875 aa).

Zn(2+) is bound by residues H564, H568, C666, and H670.

This sequence belongs to the class-II aminoacyl-tRNA synthetase family. Homotetramer. Zn(2+) serves as cofactor.

It localises to the cytoplasm. The catalysed reaction is tRNA(Ala) + L-alanine + ATP = L-alanyl-tRNA(Ala) + AMP + diphosphate. Its function is as follows. Catalyzes the attachment of alanine to tRNA(Ala) in a two-step reaction: alanine is first activated by ATP to form Ala-AMP and then transferred to the acceptor end of tRNA(Ala). Also edits incorrectly charged Ser-tRNA(Ala) and Gly-tRNA(Ala) via its editing domain. In Yersinia pestis bv. Antiqua (strain Angola), this protein is Alanine--tRNA ligase.